Here is a 453-residue protein sequence, read N- to C-terminus: Glutamyl-tRNA(Gln) amidotransferase subunit A (453 aa).

Active-site charge relay system residues include K56 and S131. Residue S155 is the Acyl-ester intermediate of the active site.

This sequence belongs to the amidase family. GatA subfamily. In terms of assembly, heterotrimer of A, B and C subunits.

The enzyme catalyses L-glutamyl-tRNA(Gln) + L-glutamine + ATP + H2O = L-glutaminyl-tRNA(Gln) + L-glutamate + ADP + phosphate + H(+). In terms of biological role, allows the formation of correctly charged Gln-tRNA(Gln) through the transamidation of misacylated Glu-tRNA(Gln) in organisms which lack glutaminyl-tRNA synthetase. The reaction takes place in the presence of glutamine and ATP through an activated gamma-phospho-Glu-tRNA(Gln). In Campylobacter fetus subsp. fetus (strain 82-40), this protein is Glutamyl-tRNA(Gln) amidotransferase subunit A.